Consider the following 351-residue polypeptide: Anthranilate phosphoribosyltransferase (351 aa).

5-phospho-alpha-D-ribose 1-diphosphate contacts are provided by residues Gly-80, Gly-83 to Asp-84, Thr-88, Asn-90 to Thr-93, Lys-108 to Ser-116, and Ser-120. Residue Gly-80 participates in anthranilate binding. Ser-92 is a binding site for Mg(2+). Asn-111 lines the anthranilate pocket. Arg-166 is a binding site for anthranilate. Mg(2+)-binding residues include Asp-229 and Glu-230.

This sequence belongs to the anthranilate phosphoribosyltransferase family. As to quaternary structure, homodimer. It depends on Mg(2+) as a cofactor.

The enzyme catalyses N-(5-phospho-beta-D-ribosyl)anthranilate + diphosphate = 5-phospho-alpha-D-ribose 1-diphosphate + anthranilate. The protein operates within amino-acid biosynthesis; L-tryptophan biosynthesis; L-tryptophan from chorismate: step 2/5. Functionally, catalyzes the transfer of the phosphoribosyl group of 5-phosphorylribose-1-pyrophosphate (PRPP) to anthranilate to yield N-(5'-phosphoribosyl)-anthranilate (PRA). The sequence is that of Anthranilate phosphoribosyltransferase from Chlorobaculum parvum (strain DSM 263 / NCIMB 8327) (Chlorobium vibrioforme subsp. thiosulfatophilum).